The following is a 168-amino-acid chain: MVDDSTRKTLSSIPLLQIRAGPREKDIWVQRLKEEYQALIKACTYVENNKQSGSDWFRLESNKEGTKWFGKCWYMHNLLKYEFDVEFDIPVTYPTTAPEIALPELDGKTAKMYRGGKICLTDHFKPLWARNVPKFGIAHAMALGLAPWLAVEVPDLIEKGVIAYKDNC.

Cys-119 functions as the Glycyl thioester intermediate in the catalytic mechanism.

It belongs to the ubiquitin-conjugating enzyme family. UFC1 subfamily.

Its function is as follows. E2-like enzyme which forms an intermediate with UFM1 via a thioester linkage. The protein is Ubiquitin-fold modifier-conjugating enzyme 1 of Drosophila grimshawi (Hawaiian fruit fly).